The following is a 1205-amino-acid chain: Plasma membrane calcium-transporting ATPase 4 (1205 aa).

The Cytoplasmic portion of the chain corresponds to 1-100 (MTNPPGQSVS…KTFLELVWEA (100 aa)). Residues 101–121 (LQDVTLIILEIAAIISLVLSF) form a helical membrane-spanning segment. Residues 122 to 147 (YRPPGGDNEICGHIASSPEEEEEGET) lie on the Extracellular side of the membrane. A helical transmembrane segment spans residues 148-168 (GWIEGAAILASVIIVVLVTAF). The Cytoplasmic segment spans residues 169 to 369 (NDWSKEKQFR…LAVQIGKAGL (201 aa)). A disordered region spans residues 294-318 (DDDDKKKKGKKQGAPENRNKAKTQD). 2 positions are modified to phosphoserine: Ser329 and Ser335. A helical transmembrane segment spans residues 370–390 (IMSVLTVVILILYFVVDNFVI). Residues 391 to 409 (QRREWLPECTPVYIQYFVK) lie on the Extracellular side of the membrane. A helical membrane pass occupies residues 410–430 (FFIIGVTVLVVAVPEGLPLAV). Residues 431–844 (TISLAYSVKK…RNVYDSISKF (414 aa)) are Cytoplasmic-facing. Residue Asp466 is the 4-aspartylphosphate intermediate of the active site. 2 residues coordinate Mg(2+): Asp786 and Asp790. The helical transmembrane segment at 845–865 (LQFQLTVNVVAVIVAFTGACI) threads the bilayer. Residues 866–872 (TQDSPLK) are Extracellular-facing. A helical membrane pass occupies residues 873–893 (AVQMLWVNLIMDTFASLALAT). The Cytoplasmic portion of the chain corresponds to 894–919 (EPPTESLLRRRPYGRNKPLISRTMMK). Residues 920-942 (NILGHAVYQLLIVFLLVFAGDTL) traverse the membrane as a helical segment. The Extracellular portion of the chain corresponds to 943–956 (FDIDSGRKAPLNSP). Residues 957–979 (PSQHYTIVFNTFVLMQLFNEINA) form a helical membrane-spanning segment. At 980 to 995 (RKIHGEKNVFAGVYRN) the chain is on the cytoplasmic side. The chain crosses the membrane as a helical span at residues 996 to 1016 (IIFCTVVLGTFFCQIMIVELG). Residues 1017–1029 (GKPFSCTSLTMEQ) are Extracellular-facing. Residues 1030–1050 (WMWCLFIGIGELLWGQVISAI) traverse the membrane as a helical segment. At 1051 to 1205 (PTKSLKFLKE…SPLPSLETPV (155 aa)) the chain is on the cytoplasmic side. A phosphoserine mark is found at Ser1065 and Ser1071. Position 1072 is an omega-N-methylarginine (Arg1072). A calmodulin-binding subdomain A region spans residues 1087-1104 (LRRGQILWVRGLNRIQTQ). Residue Thr1103 is modified to Phosphothreonine; by PKC. The interval 1105–1114 (IRVVKLFHNN) is calmodulin-binding subdomain B. Position 1145 is a phosphoserine (Ser1145).

Belongs to the cation transport ATPase (P-type) (TC 3.A.3) family. Type IIB subfamily. Interacts with PDZD11. Interacts with SLC35G1 and STIM1. Interacts with calmodulin. In terms of tissue distribution, specifically expressed by sperm in testis (at protein level).

It localises to the membrane. The protein resides in the cell projection. Its subcellular location is the cilium. The protein localises to the flagellum membrane. The catalysed reaction is Ca(2+)(in) + ATP + H2O = Ca(2+)(out) + ADP + phosphate + H(+). Activated by calcium/calmodulin. Functionally, calcium/calmodulin-regulated and magnesium-dependent enzyme that catalyzes the hydrolysis of ATP coupled with the transport of calcium out of the cell. By regulating sperm cell calcium homeostasis, may play a role in sperm motility. The sequence is that of Plasma membrane calcium-transporting ATPase 4 from Mus musculus (Mouse).